Reading from the N-terminus, the 332-residue chain is DNA-directed RNA polymerase subunit alpha (332 aa).

Positions 1–231 are alpha N-terminal domain (alpha-NTD); that stretch reads MQTNLLKPKT…EQLAVFAQLD (231 aa). An alpha C-terminal domain (alpha-CTD) region spans residues 252–332; that stretch reads FDPILLRPVD…NWPPAGLEKR (81 aa).

This sequence belongs to the RNA polymerase alpha chain family. In terms of assembly, homodimer. The RNAP catalytic core consists of 2 alpha, 1 beta, 1 beta' and 1 omega subunit. When a sigma factor is associated with the core the holoenzyme is formed, which can initiate transcription.

The catalysed reaction is RNA(n) + a ribonucleoside 5'-triphosphate = RNA(n+1) + diphosphate. In terms of biological role, DNA-dependent RNA polymerase catalyzes the transcription of DNA into RNA using the four ribonucleoside triphosphates as substrates. In Delftia acidovorans (strain DSM 14801 / SPH-1), this protein is DNA-directed RNA polymerase subunit alpha.